The primary structure comprises 274 residues: HTH-type transcriptional regulator GadX (274 aa).

The 98-residue stretch at 145 to 242 (TRVCTVINNN…GMTPTEYQER (98 aa)) folds into the HTH araC/xylS-type domain. DNA-binding regions (H-T-H motif) lie at residues 162–183 (ARIA…REEE) and 209–232 (IKRV…RNYY).

In terms of assembly, homodimer.

In terms of biological role, positively regulates the expression of about fifteen genes involved in acid resistance such as gadA, gadB and gadC. Depending on the conditions (growth phase and medium), can repress gadW. The polypeptide is HTH-type transcriptional regulator GadX (gadX) (Shigella flexneri).